The following is a 316-amino-acid chain: ATP synthase gamma chain (316 aa).

It belongs to the ATPase gamma chain family. As to quaternary structure, F-type ATPases have 2 components, CF(1) - the catalytic core - and CF(0) - the membrane proton channel. CF(1) has five subunits: alpha(3), beta(3), gamma(1), delta(1), epsilon(1). CF(0) has three main subunits: a, b and c.

It is found in the cellular thylakoid membrane. In terms of biological role, produces ATP from ADP in the presence of a proton gradient across the membrane. The gamma chain is believed to be important in regulating ATPase activity and the flow of protons through the CF(0) complex. This chain is ATP synthase gamma chain, found in Prochlorococcus marinus (strain MIT 9211).